Consider the following 226-residue polypeptide: N-(5'-phosphoribosyl)anthranilate isomerase (226 aa).

Belongs to the TrpF family.

It carries out the reaction N-(5-phospho-beta-D-ribosyl)anthranilate = 1-(2-carboxyphenylamino)-1-deoxy-D-ribulose 5-phosphate. Its pathway is amino-acid biosynthesis; L-tryptophan biosynthesis; L-tryptophan from chorismate: step 3/5. In Saccharomyces kudriavzevii (strain ATCC MYA-4449 / AS 2.2408 / CBS 8840 / NBRC 1802 / NCYC 2889) (Yeast), this protein is N-(5'-phosphoribosyl)anthranilate isomerase (TRP1).